Here is a 447-residue protein sequence, read N- to C-terminus: F-box only protein 5 (447 aa).

Phosphoserine occurs at positions 94 and 102. Positions 135-244 are interaction with EVI5; it reads ALETSRLYED…IGRKMGLECV (110 aa). The 47-residue stretch at 250-296 folds into the F-box domain; that stretch reads LFRRGLRHVLATILAQLSDMDLINVSKVSTTWKKILEDDKGAFQLYS. Residues 261–339 are sufficient for interaction with RPS6KA2; Prevents association of CDC20 with RPS6KA2; the sequence is TILAQLSDMD…KSAAQTSLKK (79 aa). The requires for efficient binding to CDC20 stretch occupies residues 261-409; it reads TILAQLSDMD…GCGFDYCTKC (149 aa). Positions 305–447 are inhibits APC ubiquitin ligase activity; the sequence is NNNKFSPHAS…KKSKKNLRRL (143 aa). A competitively blocks access of APC substrates to the D-box coreceptor formed by FZR1 and ANAPC10 region spans residues 322–325; that stretch reads RTPL. Positions 337-358 are disordered; the sequence is LKKDAQTKLSNQGDQKGSTYSR. Residues 343 to 357 are compositionally biased toward polar residues; it reads TKLSNQGDQKGSTYS. The ZBR-type zinc finger occupies 374-422; the sequence is SLKACIRCNSPAKYDCYLQRATCKREGCGFDYCTKCLCNYHTTKDCSDG. Zn(2+)-binding residues include Cys378, Cys381, Cys396, Cys401, Cys406, Cys409, His414, and Cys419. Positions 378–420 are allows a rapid multiple mono-ubiquitination of the APC substrate, but strongly inhibits the slow ubiquitin chain elongation catalyzed by UBCH10; the sequence is CIRCNSPAKYDCYLQRATCKREGCGFDYCTKCLCNYHTTKDCS. Positions 437 to 447 are sufficient to suppress UBE2S activity; essential for interaction with UBE2S; competitively inhibits the rapide ubiquitin chain elongation by UBE2D1 which blocks UBE2D1 with APC; indispensable for recruitment and position of FBXO5 to the catalytic site of APC; abrogates the inhibition of ubiquitin chain assembly primarily catalyzed by UBE2S; inhibits the ubiquitination by either UBE2C or UBE2D1; it reads TKKSKKNLRRL.

In terms of assembly, part of a SCF (SKP1-cullin-F-box) protein ligase complex. Interacts with BTRC; mediates proteolysis by the SCF ubiquitin ligase complex leading to activation of APC in late mitosis and subsequent mitotic progression. Interacts with FZR1/CDH1 and the N-terminal substrate-binding domain of CDC20; prevents APC activation. Also interacts with EVI5 which blocks its phosphorylation by PLK1 and prevents its subsequent binding to BTRC and degradation. Interacts simultaneously with anaphase promoting complex (APC), through at least ANAPC2, CDC23, CDC27, the APC substrate GMNN and the APC activator FZR1. Interacts with UBE2S; interferes with the activity of UBE2S mainly by disrupting the dynamic electrostatic association between the C-terminal tail of UBE2S and ANAPC2. Interacts with RPS6KA2; cooperates to induce the metaphase arrest of early blastomeres; increases and stabilizes interaction of FBXO5 with CDC20. In terms of processing, phosphorylation by CDK2 and subsequently by PLK1 triggers degradation during early mitosis through ubiquitin-mediated proteolysis by the SCF ubiquitin ligase complex containing the F-box protein BTRC. This degradation is necessary for the activation of APC in late mitosis and subsequent mitotic progression. Phosphorylated by RPS6KA2; increases and stabilizes interaction with CDC20. Post-translationally, ubiquitinated by the SCF(BTRC) complex following phosphorylation by PLK1. Undergoes both 'Lys-11' and 'Lys-48'-linked polyubiquitination by APC-FZR1 complex leading to degradation by proteasome during G1 phase. Degraded through the SCF(BTRC) complex; degradation occurs during oocyte maturation, between germinal vesicle breakdown (GVBD) and meiosis I, and is required for the meiosis I-meiosis II transition.

It is found in the nucleus. Its subcellular location is the cytoplasm. It localises to the cytoskeleton. The protein localises to the spindle. Its pathway is protein modification; protein ubiquitination. Its function is as follows. Regulator of APC activity during mitotic and meiotic cell cycle. During mitotic cell cycle plays a role as both substrate and inhibitor of APC-FZR1 complex. During G1 phase, plays a role as substrate of APC-FZR1 complex E3 ligase. Then switches as an inhibitor of APC-FZR1 complex during S and G2 leading to cell-cycle commitment. As APC inhibitor, prevents the degradation of APC substrates at multiple levels: by interacting with APC and blocking access of APC substrates to the D-box coreceptor, formed by FZR1 and ANAPC10; by suppressing ubiquitin ligation and chain elongation by APC by preventing the UBE2C and UBE2S activities. Plays a role in genome integrity preservation by coordinating DNA replication with mitosis through APC inhibition in interphase to stabilize CCNA2 and GMNN in order to promote mitosis and prevent rereplication and DNA damage-induced cellular senescence. During oocyte maturation, plays a role in meiosis through inactivation of APC-FZR1 complex. Inhibits APC through RPS6KA2 interaction that increases FBXO5 affiniy for CDC20 leading to the metaphase arrest of the second meiotic division before fertilization. Controls entry into the first meiotic division through inactivation of APC-FZR1 complex. Promotes migration and osteogenic differentiation of mesenchymal stem cells. The sequence is that of F-box only protein 5 from Homo sapiens (Human).